The sequence spans 1366 residues: Serine/threonine-protein kinase RUNKEL (1366 aa).

Residues 10 to 18 and Lys33 each bind ATP; that span reads IGHGKCSTV. Catalysis depends on Asp121, which acts as the Proton acceptor. Disordered stretches follow at residues 276–356, 367–386, 398–502, and 524–549; these read TKPC…VNIL, QKENEKENYRRPLPNSNENC, LDFD…DSSK, and PSRKSDKEAVHSLSFETPQPSDFSKK. Over residues 283 to 302 the composition is skewed to basic and acidic residues; that stretch reads RNGDRPNKTPPKYREKDRKG. Positions 304–313 are enriched in polar residues; sequence SKQNENSIQG. Basic and acidic residues predominate over residues 367–376; it reads QKENEKENYR. Acidic residues predominate over residues 398–414; it reads LDFDENNDDEGPDESEG. Basic and acidic residues predominate over residues 422–433; it reads QEERVMSHNENH. The span at 438 to 454 shows a compositional bias: polar residues; it reads VVSSNVPDENSSANETP. 12 HEAT repeats span residues 595–633, 638–675, 699–737, 835–872, 878–907, 908–945, 946–986, 992–1018, 1019–1057, 1072–1111, 1279–1316, and 1329–1366; these read LTNGPIMLVLVKVLRLSKTPAFRVQIASLIGLLIRHSTS, LANSGILDSLTNGLRDKHEKVRRFSMAALGELLFYIST, QVSNALISLVSSVLRKGEDDLTQVYALRTIENICSQGAY, TEEKNLFPSLLSIIEQGTEVLRGKALLFVAFLCKNSRR, FCNARFLPVVDRLAKEKDSYLQQCLEAFVN, VIASIIPGMLDTITNDIQQLMTGRRHGPVSPLNSRAPV, KTNA…LVEA, DDFRVTLLQVLECITGDAPLVTQNGEI, IIREILPSLAAIYNGNKDGDARFLCLKIWFDSLTILLTE, ISNSHFLPLYPALIQDEDPIPAYAQKLLVMLVEFDYIKIS, TNLPKITPILDSWRRRKSTELHLLVLKRVLHCLGYACK, and GHDVSKINAIVSEMKNSDAAGLNSIASLVAMELQRLPR.

This sequence belongs to the protein kinase superfamily. Ser/Thr protein kinase family. As to quaternary structure, binds to microtubules (MT). In terms of tissue distribution, expressed in proliferating tissues of seedlings, lateral roots, young rosette leaves, siliques, flowers, embryos and stems (including apical meristem).

The protein resides in the cytoplasm. Its subcellular location is the cytoskeleton. The protein localises to the phragmoplast. It localises to the spindle. The enzyme catalyses L-seryl-[protein] + ATP = O-phospho-L-seryl-[protein] + ADP + H(+). It catalyses the reaction L-threonyl-[protein] + ATP = O-phospho-L-threonyl-[protein] + ADP + H(+). Its function is as follows. Essential protein that regulates phragmoplast microtubule organization during cell plate expansion in cytokinesis during cell division, both somatic and syncytial. Required for endosperm cellularisation. In pollen development, involved in cellularisation during microsporogenesis by regulating radial microtubules (MT) organization in microspore mother cells. Seems to not have kinase activity. This Arabidopsis thaliana (Mouse-ear cress) protein is Serine/threonine-protein kinase RUNKEL.